A 375-amino-acid polypeptide reads, in one-letter code: Enoyl-[acyl-carrier-protein] reductase [NADH] 1, chloroplastic (375 aa).

Residues 1-67 constitute a chloroplast transit peptide; sequence MGASAATGMQ…SSKRSGVAIR (67 aa). NAD(+) contacts are provided by residues Gly-91, Tyr-98, 155–156, 202–203, and Leu-252; these read DA and SL. Residues Tyr-254 and Tyr-264 each act as proton acceptor in the active site. Residues Lys-272 and 302–306 each bind NAD(+); that span reads LGSRA.

Belongs to the short-chain dehydrogenases/reductases (SDR) family. FabI subfamily. Homotetramer.

The protein localises to the plastid. It localises to the chloroplast. It carries out the reaction a 2,3-saturated acyl-[ACP] + NAD(+) = a (2E)-enoyl-[ACP] + NADH + H(+). The protein operates within lipid metabolism; fatty acid biosynthesis. In terms of biological role, catalyzes the NAD-dependent reduction of a carbon-carbon double bond in an enoyl moiety that is covalently linked to an acyl carrier protein (ACP). Catalyzes the last reduction step in the de novo synthesis cycle of fatty acids. Involved in the elongation cycle of fatty acids which are used in lipid metabolism. Required for normal plant growth. The chain is Enoyl-[acyl-carrier-protein] reductase [NADH] 1, chloroplastic from Oryza sativa subsp. japonica (Rice).